The primary structure comprises 877 residues: Alanine--tRNA ligase (877 aa).

4 residues coordinate Zn(2+): histidine 564, histidine 568, cysteine 666, and histidine 670.

Belongs to the class-II aminoacyl-tRNA synthetase family. It depends on Zn(2+) as a cofactor.

The protein resides in the cytoplasm. It catalyses the reaction tRNA(Ala) + L-alanine + ATP = L-alanyl-tRNA(Ala) + AMP + diphosphate. In terms of biological role, catalyzes the attachment of alanine to tRNA(Ala) in a two-step reaction: alanine is first activated by ATP to form Ala-AMP and then transferred to the acceptor end of tRNA(Ala). Also edits incorrectly charged Ser-tRNA(Ala) and Gly-tRNA(Ala) via its editing domain. The protein is Alanine--tRNA ligase of Pelotomaculum thermopropionicum (strain DSM 13744 / JCM 10971 / SI).